Consider the following 196-residue polypeptide: Nucleotide kinase gp1.7 (196 aa).

A disordered region spans residues P97 to T118.

In terms of assembly, dodecamer.

The enzyme catalyses dGMP + ATP = dGDP + ADP. It catalyses the reaction dTMP + ATP = dTDP + ADP. Nucleotide kinase that catalyzes the phosphorylation of dGMP and dTMP to dGDP and dTDP. A double mutation in this protein and the RecBCD inhibitor gp5.9 protein allow phage to overcome the retron Ec48 bacteriophage defense system. This protein alone when overexpressed in E.coli does not cause growth arrest; Y128C may be a silent mutation. The protein is Nucleotide kinase gp1.7 of Escherichia coli (Bacteriophage T7).